Consider the following 122-residue polypeptide: Large ribosomal subunit protein uL14 (122 aa).

Belongs to the universal ribosomal protein uL14 family. Part of the 50S ribosomal subunit. Forms a cluster with proteins L3 and L19. In the 70S ribosome, L14 and L19 interact and together make contacts with the 16S rRNA in bridges B5 and B8.

Binds to 23S rRNA. Forms part of two intersubunit bridges in the 70S ribosome. This Psychromonas ingrahamii (strain DSM 17664 / CCUG 51855 / 37) protein is Large ribosomal subunit protein uL14.